A 277-amino-acid polypeptide reads, in one-letter code: S-formylglutathione hydrolase FrmB (277 aa).

Catalysis depends on charge relay system residues S145, D221, and H254.

The protein belongs to the esterase D family.

It carries out the reaction S-formylglutathione + H2O = formate + glutathione + H(+). In terms of biological role, serine hydrolase involved in the detoxification of formaldehyde. Hydrolyzes S-formylglutathione to glutathione and formate. This Escherichia coli (strain SMS-3-5 / SECEC) protein is S-formylglutathione hydrolase FrmB (frmB).